The chain runs to 297 residues: Protein PecM (297 aa).

Helical transmembrane passes span 6–26 (FAFY…QFLP), 38–58 (ALPA…GWLW), 60–80 (LFVL…FAAY), 86–106 (VVAL…FLLL), 116–136 (VAAV…KAPL), 138–158 (PAGL…LVLT), 167–187 (MTML…ILPV), 203–223 (LAGY…MWFS), 231–251 (VIMS…GFLF), and 261–281 (LVGV…SLFS). EamA domains follow at residues 12 to 130 (CVWG…LLIS) and 149 to 276 (MSMA…IVQD).

The protein belongs to the EamA transporter family.

It is found in the cell membrane. In terms of biological role, involved in pectinase, cellulase, and blue pigment regulation. The protein is Protein PecM (pecM) of Dickeya dadantii (strain 3937) (Erwinia chrysanthemi (strain 3937)).